Here is a 235-residue protein sequence, read N- to C-terminus: Glycerol uptake facilitator protein 2 (235 aa).

Transmembrane regions (helical) follow at residues 4–24 (FLGE…SGAA), 39–59 (FICL…GQFG), 62–82 (GHLN…PMAN), 83–103 (VWPY…IVII), 134–154 (VFNF…LLNL), and 165–185 (MVGL…GFAI). Positions 65 to 67 (NPA) match the NPA 1 motif. Positions 186-188 (NPA) match the NPA 2 motif. The helical transmembrane segment at 210–230 (WGYAWVPMFGPLLGGILAAGL) threads the bilayer.

It belongs to the MIP/aquaporin (TC 1.A.8) family.

The protein resides in the cell membrane. Transporter that facilitates the transmembrane diffusion of water, dihydroxyacetone, glycerol and H(2)O(2). Is not permeable to urea and D/L-lactic acid. The polypeptide is Glycerol uptake facilitator protein 2 (Lactiplantibacillus plantarum (strain ATCC BAA-793 / NCIMB 8826 / WCFS1) (Lactobacillus plantarum)).